The chain runs to 479 residues: 6-phosphogluconate dehydrogenase, decarboxylating (479 aa).

NADP(+) is bound by residues 9–14 (GLGVMG), 32–34 (NRT), 77–79 (VQA), and Asn-105. Substrate contacts are provided by residues Asn-105 and 131–133 (SGG). The active-site Proton acceptor is Lys-186. Substrate is bound at residue 189-190 (HN). Residue Glu-193 is the Proton donor of the active site. Tyr-194, Lys-263, Arg-290, Arg-454, and His-460 together coordinate substrate.

It belongs to the 6-phosphogluconate dehydrogenase family. Homodimer.

It carries out the reaction 6-phospho-D-gluconate + NADP(+) = D-ribulose 5-phosphate + CO2 + NADPH. Its pathway is carbohydrate degradation; pentose phosphate pathway; D-ribulose 5-phosphate from D-glucose 6-phosphate (oxidative stage): step 3/3. Its function is as follows. Catalyzes the oxidative decarboxylation of 6-phosphogluconate to ribulose 5-phosphate and CO(2), with concomitant reduction of NADP to NADPH. The polypeptide is 6-phosphogluconate dehydrogenase, decarboxylating (GND) (Trypanosoma brucei brucei).